Reading from the N-terminus, the 299-residue chain is Protease HtpX homolog (299 aa).

Helical transmembrane passes span 7–24 and 29–46; these read GILM…GALI and GAII…FTFW. Position 130 (His-130) interacts with Zn(2+). The active site involves Glu-131. Position 134 (His-134) interacts with Zn(2+). 2 consecutive transmembrane segments (helical) span residues 145–165 and 174–194; these read VTAT…FFGG and PVGI…AGLV. Glu-203 is a binding site for Zn(2+).

Belongs to the peptidase M48B family. It depends on Zn(2+) as a cofactor.

Its subcellular location is the cell inner membrane. This is Protease HtpX homolog from Cereibacter sphaeroides (strain ATCC 17025 / ATH 2.4.3) (Rhodobacter sphaeroides).